The chain runs to 105 residues: V-type ATP synthase subunit F (105 aa).

Belongs to the V-ATPase F subunit family.

Produces ATP from ADP in the presence of a proton gradient across the membrane. The polypeptide is V-type ATP synthase subunit F (Clostridium perfringens (strain 13 / Type A)).